The primary structure comprises 199 residues: Putative peroxiredoxin ycf42 (199 aa).

The region spanning 8-165 is the Thioredoxin domain; it reads LRVGQLAPDF…TLRVLQAIQY (158 aa). Cysteine 53 functions as the Cysteine sulfenic acid (-SOH) intermediate in the catalytic mechanism.

Belongs to the peroxiredoxin family. AhpC/Prx1 subfamily. Homodimer; disulfide-linked, upon oxidation. The Cys-53-SH group is the primary site of oxidation by H(2)O(2), and the oxidized Cys-53 (probably Cys-SOH) rapidly reacts with Cys-174-SH of the other subunit to form an intermolecular disulfide. This disulfide is subsequently reduced by thioredoxin.

The protein resides in the plastid. Its subcellular location is the chloroplast. It catalyses the reaction a hydroperoxide + [thioredoxin]-dithiol = an alcohol + [thioredoxin]-disulfide + H2O. Its function is as follows. Thiol-specific peroxidase that catalyzes the reduction of hydrogen peroxide and organic hydroperoxides to water and alcohols, respectively. Plays a role in cell protection against oxidative stress by detoxifying peroxides. This Pyropia yezoensis (Susabi-nori) protein is Putative peroxiredoxin ycf42 (ycf42).